We begin with the raw amino-acid sequence, 216 residues long: UPF0502 protein PFL_4004 (216 aa).

Belongs to the UPF0502 family.

The chain is UPF0502 protein PFL_4004 from Pseudomonas fluorescens (strain ATCC BAA-477 / NRRL B-23932 / Pf-5).